The sequence spans 399 residues: Dual-specificity RNA methyltransferase RlmN (399 aa).

The active-site Proton acceptor is the glutamate 121. The 250-residue stretch at aspartate 127–leucine 376 folds into the Radical SAM core domain. Cysteine 134 and cysteine 379 form a disulfide bridge. [4Fe-4S] cluster is bound by residues cysteine 141, cysteine 145, and cysteine 148. Residues glycine 205 to glutamate 206, serine 237, serine 259 to histidine 261, and asparagine 336 contribute to the S-adenosyl-L-methionine site. Cysteine 379 acts as the S-methylcysteine intermediate in catalysis.

Belongs to the radical SAM superfamily. RlmN family. [4Fe-4S] cluster serves as cofactor.

The protein localises to the cytoplasm. The enzyme catalyses adenosine(2503) in 23S rRNA + 2 reduced [2Fe-2S]-[ferredoxin] + 2 S-adenosyl-L-methionine = 2-methyladenosine(2503) in 23S rRNA + 5'-deoxyadenosine + L-methionine + 2 oxidized [2Fe-2S]-[ferredoxin] + S-adenosyl-L-homocysteine. It carries out the reaction adenosine(37) in tRNA + 2 reduced [2Fe-2S]-[ferredoxin] + 2 S-adenosyl-L-methionine = 2-methyladenosine(37) in tRNA + 5'-deoxyadenosine + L-methionine + 2 oxidized [2Fe-2S]-[ferredoxin] + S-adenosyl-L-homocysteine. Functionally, specifically methylates position 2 of adenine 2503 in 23S rRNA and position 2 of adenine 37 in tRNAs. m2A2503 modification seems to play a crucial role in the proofreading step occurring at the peptidyl transferase center and thus would serve to optimize ribosomal fidelity. This is Dual-specificity RNA methyltransferase RlmN from Methylocella silvestris (strain DSM 15510 / CIP 108128 / LMG 27833 / NCIMB 13906 / BL2).